The primary structure comprises 81 residues: Acyl carrier protein (81 aa).

Residues 4 to 79 (AEIKDKVYDI…QAIDYIVNKK (76 aa)) enclose the Carrier domain. O-(pantetheine 4'-phosphoryl)serine is present on Ser39.

It belongs to the acyl carrier protein (ACP) family. In terms of processing, 4'-phosphopantetheine is transferred from CoA to a specific serine of apo-ACP by AcpS. This modification is essential for activity because fatty acids are bound in thioester linkage to the sulfhydryl of the prosthetic group.

The protein resides in the cytoplasm. The protein operates within lipid metabolism; fatty acid biosynthesis. In terms of biological role, carrier of the growing fatty acid chain in fatty acid biosynthesis. The chain is Acyl carrier protein from Chlorobaculum tepidum (strain ATCC 49652 / DSM 12025 / NBRC 103806 / TLS) (Chlorobium tepidum).